A 182-amino-acid polypeptide reads, in one-letter code: Large ribosomal subunit protein uL10 (182 aa).

It belongs to the universal ribosomal protein uL10 family. In terms of assembly, part of the ribosomal stalk of the 50S ribosomal subunit. The N-terminus interacts with L11 and the large rRNA to form the base of the stalk. The C-terminus forms an elongated spine to which L12 dimers bind in a sequential fashion forming a multimeric L10(L12)X complex.

Its function is as follows. Forms part of the ribosomal stalk, playing a central role in the interaction of the ribosome with GTP-bound translation factors. The protein is Large ribosomal subunit protein uL10 of Microcystis aeruginosa (strain NIES-843 / IAM M-2473).